The primary structure comprises 1504 residues: MSALPLALRSARRAGARSLGLIGGRGSADVIYAPPPPSRGAVAVLATPSALTDRGTERQGYRQAHVQAMPGEAAGAELPLPEAGGPGSRTDHSCDAAIATILKGDQLEPHGLTPGPSPLALTFLSSKPGARPQPEGASWDAGPSGAASAWVDPAEGSPSLVVLPEGLPLRPVPAEGPLPTTLEPRIVMGEETCQVIASPRAAWPVLRDREGGHPALHPPPELCSQGDPPVPSPPPDLESYFTPPSTPTKSTHALLPDHGPHRDAWDLEAELLDELLDSTPASPSGSYITADGDSWASSPSCSLSLLDPAEGLDFPSDWGLSPSGSVADDLEPHPAAPPEPPSSESSLSADSSSSWSQEGHFFDPNFLANDPMIPAALLPFRGSLIFQVEAVEVTPLPQEEEEDEEDVAATAAAAAPAAATPDGDLAGEGEDDSTSASFLQSLSDLSIIEGMDEAFAFRDDTSAASSDSDSASYAGADDDRLYSGEPHAQPSAQNTEQAYRSRATFPGIESTPQTSEQEICLTNSQESVAEIAEEILTLGLESEAMRTPPDQQAAPGPQVEETPTVTPWVGNKVDLVVEQVSKALPEPCQEGISTTLGCKPLTAEAIPDLQEGASPSLCPVLPEKKEEGQGLPSTLEYVAVALEGPWKAEGGVTIPQDPLMTLPPLLQSTVPTSGPESVAVVALEPQQNEGCVTVLPDVPVVLPPSPQSVDPSSGPEAMAVATYEFQRAKEGTPGLQDSPVAASPALQGPDPTSEPEPEVVVTSRSQQDEGIVTVPQESPTASSLTLQSSHPTSDQEREVAATLGPQQAEEGVTIPQVAPVASPSLLQGLESTSDLESVVVGTPESQQDEGIATATQDTPVMAPPPLRGTDSTSDPELIAPDTSQALQREAGHTPGTKPSVSEAHQELGVASGPRPVPKEGDAEPPPHSAPPASNQAQQNGSEPGYKSDSFGAPEESDSTLSTKTSEPTSCMGEKVAANMSAPKQGACLEAHDGVKTHSPQREALRSKNKRGRGTKSPGQGNGPKSATSQGAVETCRAHSAARSEVSQPQLRSNEDTSGPRLPVAVSVQARLGSCPGSPARATCTLSRVYAEETSRCAPPFQHLEPMLGLGSAEQPKVTPGILNLSPDNSAGDLLTTSQNRFLDPDPAPSTLDRASQSSPGPPDPCLCPPPQKASEEEEKPPASRGPMPRAGAQGAAAITTSGSTKPPGARQRVSLSPHSTLNPKVAPTDTKDLACIISSPCQVPPPSGTQNPSGPREFPALEQKDEDSLEEDAQRAPGSGQRWESHGESSSELDEYLAPPPDAQRTPGSGQRSESHGESSSELGEQDLSPQKSQCPAQGPAGSNEETIAKAKQSRSEKKARKAMSKLGLRQIQGVTRITIQKSKNILFVIAKPDVFKSPASDTYVVFGEAKIEDLSQQVHKAAAEKFKVPSEPSALVPELSPGPRVRPECEEQEEEDEEVEEAGLEPRDIELVMAQANVTRAKAVRALKDNHSDIVNAIMELTM.

Disordered regions lie at residues 127-150, 208-261, 315-356, 396-436, 460-525, 539-565, 701-812, 834-1064, 1099-1366, and 1430-1467; these read KPGA…ASAW, DREG…HGPH, PSDW…SSWS, LPQE…STSA, DTSA…TNSQ, GLES…TPTV, VLPP…EEGV, DLES…LPVA, PFQH…AMSK, and PSEP…GLEP. Positions 342–354 are enriched in low complexity; the sequence is SSESSLSADSSSS. Over residues 398 to 407 the composition is skewed to acidic residues; the sequence is QEEEEDEEDV. Composition is skewed to low complexity over residues 408-422 and 462-475; these read AATA…ATPD and SAAS…SYAG. Positions 510 to 525 are enriched in polar residues; that stretch reads STPQTSEQEICLTNSQ. Residues 775–792 show a composition bias toward polar residues; sequence PQESPTASSLTLQSSHPT. Low complexity predominate over residues 930–939; that stretch reads PPASNQAQQN. Over residues 958-968 the composition is skewed to polar residues; it reads STLSTKTSEPT. A compositionally biased stretch (basic and acidic residues) spans 989-1005; sequence EAHDGVKTHSPQREALR. Position 998 is a phosphoserine (Ser998). Over residues 1016–1031 the composition is skewed to polar residues; it reads SPGQGNGPKSATSQGA. Positions 1159–1171 are enriched in pro residues; that stretch reads PGPPDPCLCPPPQ. Polar residues predominate over residues 1213–1222; it reads VSLSPHSTLN. Residue Ser1268 is modified to Phosphoserine. The NAC-A/B domain maps to 1354-1419; sequence SRSEKKARKA…AKIEDLSQQV (66 aa). Residues 1451 to 1464 are compositionally biased toward acidic residues; the sequence is EEQEEEDEEVEEAG.

This sequence belongs to the NAC-alpha family.

It localises to the cytoplasm. It is found in the nucleus. May prevent inappropriate targeting of non-secretory polypeptides to the endoplasmic reticulum (ER). May bind to nascent polypeptide chains as they emerge from the ribosome and block their interaction with the signal recognition particle (SRP), which normally targets nascent secretory peptides to the ER. May also reduce the inherent affinity of ribosomes for protein translocation sites in the ER membrane (M sites). The sequence is that of NAC-alpha domain-containing protein 1 (Nacad) from Mus musculus (Mouse).